Consider the following 556-residue polypeptide: Urocanate hydratase (556 aa).

NAD(+)-binding positions include 52–53, Gln-130, 176–178, Glu-196, Arg-201, 242–243, 263–267, 273–274, and Tyr-322; these read GG, GMG, NA, QTSAH, and YL. Cys-410 is an active-site residue. Position 492 (Gly-492) interacts with NAD(+).

Belongs to the urocanase family. It depends on NAD(+) as a cofactor.

It localises to the cytoplasm. It carries out the reaction 4-imidazolone-5-propanoate = trans-urocanate + H2O. Its pathway is amino-acid degradation; L-histidine degradation into L-glutamate; N-formimidoyl-L-glutamate from L-histidine: step 2/3. Catalyzes the conversion of urocanate to 4-imidazolone-5-propionate. This Shewanella sp. (strain MR-7) protein is Urocanate hydratase.